The chain runs to 290 residues: Nucleoid occlusion protein (290 aa).

Residues 153-172 (EALAQRLGKGQSTIANKLRL) constitute a DNA-binding region (H-T-H motif).

This sequence belongs to the ParB family.

It localises to the cytoplasm. The protein localises to the nucleoid. Effects nucleoid occlusion by binding relatively nonspecifically to DNA and preventing the assembly of the division machinery in the vicinity of the nucleoid, especially under conditions that disturb the cell cycle. It helps to coordinate cell division and chromosome segregation by preventing the formation of the Z ring through the nucleoid, which would cause chromosome breakage. This chain is Nucleoid occlusion protein, found in Bacillus cytotoxicus (strain DSM 22905 / CIP 110041 / 391-98 / NVH 391-98).